Reading from the N-terminus, the 182-residue chain is Large ribosomal subunit protein uL5 (182 aa).

This sequence belongs to the universal ribosomal protein uL5 family. In terms of assembly, part of the 50S ribosomal subunit; part of the 5S rRNA/L5/L18/L25 subcomplex. Contacts the 5S rRNA and the P site tRNA. Forms a bridge to the 30S subunit in the 70S ribosome.

Functionally, this is one of the proteins that bind and probably mediate the attachment of the 5S RNA into the large ribosomal subunit, where it forms part of the central protuberance. In the 70S ribosome it contacts protein S13 of the 30S subunit (bridge B1b), connecting the 2 subunits; this bridge is implicated in subunit movement. Contacts the P site tRNA; the 5S rRNA and some of its associated proteins might help stabilize positioning of ribosome-bound tRNAs. The protein is Large ribosomal subunit protein uL5 of Thermosipho melanesiensis (strain DSM 12029 / CIP 104789 / BI429).